Here is a 417-residue protein sequence, read N- to C-terminus: Glucose-1-phosphatase (417 aa).

Positions 1-23 (MKYKVLTLCLSAALFAPIAPTMA) are cleaved as a signal peptide. Arg-41 is a substrate binding site. Residue His-42 is the Nucleophile of the active site. Residues Arg-45, Arg-118, and Glu-220 each coordinate substrate. Asp-315 serves as the catalytic Proton donor.

This sequence belongs to the histidine acid phosphatase family. As to quaternary structure, homodimer.

Its subcellular location is the periplasm. It carries out the reaction alpha-D-glucose 1-phosphate + H2O = D-glucose + phosphate. The chain is Glucose-1-phosphatase (agp) from Providencia rettgeri.